We begin with the raw amino-acid sequence, 196 residues long: ATP-dependent Clp protease proteolytic subunit (196 aa).

The active-site Nucleophile is the serine 99. Histidine 124 is a catalytic residue.

It belongs to the peptidase S14 family. In terms of assembly, fourteen ClpP subunits assemble into 2 heptameric rings which stack back to back to give a disk-like structure with a central cavity, resembling the structure of eukaryotic proteasomes.

The protein resides in the cytoplasm. The enzyme catalyses Hydrolysis of proteins to small peptides in the presence of ATP and magnesium. alpha-casein is the usual test substrate. In the absence of ATP, only oligopeptides shorter than five residues are hydrolyzed (such as succinyl-Leu-Tyr-|-NHMec, and Leu-Tyr-Leu-|-Tyr-Trp, in which cleavage of the -Tyr-|-Leu- and -Tyr-|-Trp bonds also occurs).. Cleaves peptides in various proteins in a process that requires ATP hydrolysis. Has a chymotrypsin-like activity. Plays a major role in the degradation of misfolded proteins. The sequence is that of ATP-dependent Clp protease proteolytic subunit from Helicobacter pylori (strain ATCC 700392 / 26695) (Campylobacter pylori).